The sequence spans 680 residues: DNA-directed RNA polymerase subunit beta' (680 aa).

Zn(2+) contacts are provided by Cys-69, Cys-71, Cys-87, and Cys-90. Residues Asp-489, Asp-491, and Asp-493 each contribute to the Mg(2+) site.

Belongs to the RNA polymerase beta' chain family. RpoC1 subfamily. In plastids the minimal PEP RNA polymerase catalytic core is composed of four subunits: alpha, beta, beta', and beta''. When a (nuclear-encoded) sigma factor is associated with the core the holoenzyme is formed, which can initiate transcription. Mg(2+) is required as a cofactor. Zn(2+) serves as cofactor.

It localises to the plastid. Its subcellular location is the chloroplast. It carries out the reaction RNA(n) + a ribonucleoside 5'-triphosphate = RNA(n+1) + diphosphate. Functionally, DNA-dependent RNA polymerase catalyzes the transcription of DNA into RNA using the four ribonucleoside triphosphates as substrates. The chain is DNA-directed RNA polymerase subunit beta' from Olimarabidopsis pumila (Dwarf rocket).